A 39-amino-acid chain; its full sequence is Potassium channel toxin alpha-KTx 2.1 (39 aa).

3 disulfide bridges follow: C7–C29, C13–C34, and C17–C36. An interaction with Ca(2+)-activated K(+) channels region spans residues 26–34 (GAKCMNGKC). N39 carries the asparagine amide modification.

This sequence belongs to the short scorpion toxin superfamily. Potassium channel inhibitor family. Alpha-KTx 02 subfamily. As to expression, expressed by the venom gland.

The protein resides in the secreted. Its function is as follows. Blocks voltage-gated potassium channels (mKv1.1/KCNA1 (Kd&gt;25 nM), rKv1.2/KCNA2 (Kd=2 nM), mKv1.3/KCNA3 (Kd=1 nM), hKv1.5/KCNA5 (Kd&gt;25 nM) and mKv3.1/KCNC1 (Kd&gt;25 nM)) and calcium-activated potassium channels (KCa1.1/KCNMA1 and KCa3.1/KCNN4, Kd&gt;25 nM). The chain is Potassium channel toxin alpha-KTx 2.1 from Centruroides noxius (Mexican scorpion).